A 215-amino-acid polypeptide reads, in one-letter code: Probable transaldolase (215 aa).

The Schiff-base intermediate with substrate role is filled by Lys-83.

The protein belongs to the transaldolase family. Type 3B subfamily.

It is found in the cytoplasm. The catalysed reaction is D-sedoheptulose 7-phosphate + D-glyceraldehyde 3-phosphate = D-erythrose 4-phosphate + beta-D-fructose 6-phosphate. It functions in the pathway carbohydrate degradation; pentose phosphate pathway; D-glyceraldehyde 3-phosphate and beta-D-fructose 6-phosphate from D-ribose 5-phosphate and D-xylulose 5-phosphate (non-oxidative stage): step 2/3. Functionally, transaldolase is important for the balance of metabolites in the pentose-phosphate pathway. The chain is Probable transaldolase from Clostridium perfringens (strain 13 / Type A).